The chain runs to 447 residues: Methyl-coenzyme M reductase I subunit beta (447 aa).

Y371 provides a ligand contact to coenzyme M. G373 serves as a coordination point for coenzyme B.

Belongs to the methyl-coenzyme M reductase beta subunit family. As to quaternary structure, MCR is a hexamer of two alpha, two beta, and two gamma chains, forming a dimer of heterotrimers. It depends on coenzyme F430 as a cofactor.

The protein resides in the cytoplasm. The enzyme catalyses coenzyme B + methyl-coenzyme M = methane + coenzyme M-coenzyme B heterodisulfide. It participates in one-carbon metabolism; methyl-coenzyme M reduction; methane from methyl-coenzyme M: step 1/1. In terms of biological role, component of the methyl-coenzyme M reductase (MCR) I that catalyzes the reductive cleavage of methyl-coenzyme M (CoM-S-CH3 or 2-(methylthio)ethanesulfonate) using coenzyme B (CoB or 7-mercaptoheptanoylthreonine phosphate) as reductant which results in the production of methane and the mixed heterodisulfide of CoB and CoM (CoM-S-S-CoB). This is the final step in methanogenesis. This Methanocaldococcus jannaschii (strain ATCC 43067 / DSM 2661 / JAL-1 / JCM 10045 / NBRC 100440) (Methanococcus jannaschii) protein is Methyl-coenzyme M reductase I subunit beta (mcrB).